The primary structure comprises 129 residues: Small ribosomal subunit protein uS11 (129 aa).

This sequence belongs to the universal ribosomal protein uS11 family. As to quaternary structure, part of the 30S ribosomal subunit. Interacts with proteins S7 and S18. Binds to IF-3.

Its function is as follows. Located on the platform of the 30S subunit, it bridges several disparate RNA helices of the 16S rRNA. Forms part of the Shine-Dalgarno cleft in the 70S ribosome. This chain is Small ribosomal subunit protein uS11, found in Sphingopyxis alaskensis (strain DSM 13593 / LMG 18877 / RB2256) (Sphingomonas alaskensis).